Here is a 425-residue protein sequence, read N- to C-terminus: Stabilizer of axonemal microtubules 4 (425 aa).

Disordered regions lie at residues proline 93–lysine 126, glutamate 203–leucine 225, and lysine 316–proline 335. Polar residues predominate over residues phenylalanine 207–serine 222.

In terms of assembly, microtubule inner protein component of sperm flagellar doublet microtubules. Interacts with PPP1CA.

It is found in the cell projection. It localises to the cilium. The protein localises to the cytoplasm. Its subcellular location is the cytoskeleton. The protein resides in the flagellum axoneme. The sequence is that of Stabilizer of axonemal microtubules 4 from Homo sapiens (Human).